A 437-amino-acid polypeptide reads, in one-letter code: Glutamyl-tRNA reductase (437 aa).

Substrate is bound by residues 49-52, Ser109, 114-116, and Gln120; these read TCNR and EGQ. The active-site Nucleophile is the Cys50. 198 to 203 contacts NADP(+); sequence GAGRMS.

This sequence belongs to the glutamyl-tRNA reductase family. Homodimer.

The enzyme catalyses (S)-4-amino-5-oxopentanoate + tRNA(Glu) + NADP(+) = L-glutamyl-tRNA(Glu) + NADPH + H(+). Its pathway is porphyrin-containing compound metabolism; protoporphyrin-IX biosynthesis; 5-aminolevulinate from L-glutamyl-tRNA(Glu): step 1/2. The protein operates within porphyrin-containing compound metabolism; chlorophyll biosynthesis. Functionally, catalyzes the NADPH-dependent reduction of glutamyl-tRNA(Glu) to glutamate 1-semialdehyde (GSA). This chain is Glutamyl-tRNA reductase, found in Synechococcus sp. (strain CC9311).